The sequence spans 114 residues: uncharacterized protein (114 aa).

Transmembrane regions (helical) follow at residues Cys-58–Leu-78 and Ser-94–Ala-114.

Its subcellular location is the membrane. This is an uncharacterized protein from Saccharomyces cerevisiae (strain ATCC 204508 / S288c) (Baker's yeast).